Consider the following 148-residue polypeptide: Protein-export protein SecB (148 aa).

The protein belongs to the SecB family. As to quaternary structure, homotetramer, a dimer of dimers. One homotetramer interacts with 1 SecA dimer.

The protein resides in the cytoplasm. Functionally, one of the proteins required for the normal export of preproteins out of the cell cytoplasm. It is a molecular chaperone that binds to a subset of precursor proteins, maintaining them in a translocation-competent state. It also specifically binds to its receptor SecA. This chain is Protein-export protein SecB, found in Psychrobacter arcticus (strain DSM 17307 / VKM B-2377 / 273-4).